An 81-amino-acid chain; its full sequence is Photosystem I iron-sulfur center (81 aa).

4Fe-4S ferredoxin-type domains follow at residues 2–31 (SHAV…MVPW) and 39–68 (IASA…VRVY). Residues Cys11, Cys14, Cys17, Cys21, Cys48, Cys51, Cys54, and Cys58 each coordinate [4Fe-4S] cluster.

As to quaternary structure, the eukaryotic PSI reaction center is composed of at least 11 subunits. Requires [4Fe-4S] cluster as cofactor.

The protein localises to the plastid. Its subcellular location is the chloroplast thylakoid membrane. The catalysed reaction is reduced [plastocyanin] + hnu + oxidized [2Fe-2S]-[ferredoxin] = oxidized [plastocyanin] + reduced [2Fe-2S]-[ferredoxin]. Functionally, apoprotein for the two 4Fe-4S centers FA and FB of photosystem I (PSI); essential for photochemical activity. FB is the terminal electron acceptor of PSI, donating electrons to ferredoxin. The C-terminus interacts with PsaA/B/D and helps assemble the protein into the PSI complex. Required for binding of PsaD and PsaE to PSI. PSI is a plastocyanin/cytochrome c6-ferredoxin oxidoreductase, converting photonic excitation into a charge separation, which transfers an electron from the donor P700 chlorophyll pair to the spectroscopically characterized acceptors A0, A1, FX, FA and FB in turn. This Ostreococcus tauri protein is Photosystem I iron-sulfur center.